A 706-amino-acid polypeptide reads, in one-letter code: Transferrin-binding protein B (706 aa).

A signal peptide spans 1-20 (MKHIPLTTLCVAISAVLLTA). Cys21 is lipidated: N-palmitoyl cysteine. A lipid anchor (S-diacylglycerol cysteine) is attached at Cys21. Disordered regions lie at residues 26–92 (GSNP…KEQV) and 384–412 (GSAIASDKEKDSETKHPFTSDAKDRLEGG). Gly residues predominate over residues 42-51 (GNTGNTGNAG). A compositionally biased stretch (basic and acidic residues) spans 389 to 410 (SDKEKDSETKHPFTSDAKDRLE).

It belongs to the TbpB family.

It localises to the cell outer membrane. The protein resides in the cell surface. Functionally, moraxella acquires iron by extracting it from serum transferrin (TF) in its human host. Acts as a transferrin receptor and is required for transferrin utilization. The protein is Transferrin-binding protein B of Moraxella catarrhalis (Branhamella catarrhalis).